A 518-amino-acid polypeptide reads, in one-letter code: MVEAAAGRRSGANRRRPSGGGERRRQQQQHQRLVAVAVAARVVMVAPAATPAPAAGGGGGCVEDILGCLLGVLRALGVTWAAAARPQRQQPRLAAQTPRGPAPGADGRRAAAELRGIPGRIAGNGACAVASLYTLQGKKGVNQDAMIVWENFCSREDTIFCGVFDGHGPNGHLVAKRVRDLLPIKLGADLGTDEGRQTSTSSIKSNGDETGSPGNMGRDAEQNGEYPEIFTALRTSFLRAFNVMDRDLKLHKSIDCFFSGTTAVAVLKQGRNLIIGNLGDSRAILGTRDKDNQLMAVQLTVDLKPNIPSEAQRIRQRRGRIFALPEEPEVARVWLPKYNSPGLAMARAFGDFCLKDYGLISMPEVSYHRITEKDEFVVLATDGVWDVLSNTEVVSIVNRATSRASAARLLVESAHRAWRARFPTSKIDDCAVVCLFLDTDELSETSSSMARDMTNAVEVSSGQHSNTIQLSTGVSSDVVTAVLTDGDDLSAVDAVAKLVTLTDLPNNASGATQSITTK.

Composition is skewed to low complexity over residues 1–10 (MVEAAAGRRS) and 86–105 (PQRQ…APGA). Disordered stretches follow at residues 1–31 (MVEA…QQHQ) and 86–108 (PQRQ…ADGR). The PPM-type phosphatase domain maps to 129-437 (VASLYTLQGK…DDCAVVCLFL (309 aa)). Mn(2+)-binding residues include Asp-165 and Gly-166. The segment at 192–222 (TDEGRQTSTSSIKSNGDETGSPGNMGRDAEQ) is disordered. Polar residues predominate over residues 197–213 (QTSTSSIKSNGDETGSP). Mn(2+) contacts are provided by Asp-382 and Asp-428.

The protein belongs to the PP2C family. Mg(2+) is required as a cofactor. It depends on Mn(2+) as a cofactor.

It catalyses the reaction O-phospho-L-seryl-[protein] + H2O = L-seryl-[protein] + phosphate. The catalysed reaction is O-phospho-L-threonyl-[protein] + H2O = L-threonyl-[protein] + phosphate. The sequence is that of Probable protein phosphatase 2C 14 from Oryza sativa subsp. japonica (Rice).